The sequence spans 268 residues: Putative esterase/lipase 2 (268 aa).

Residue His28 is part of the active site. His96 serves as the catalytic Charge relay system.

It belongs to the lipase/esterase LIP3/BchO family.

In Mycoplasma pneumoniae (strain ATCC 29342 / M129 / Subtype 1) (Mycoplasmoides pneumoniae), this protein is Putative esterase/lipase 2.